Consider the following 251-residue polypeptide: Small ribosomal subunit protein uS3 (251 aa).

One can recognise a KH type-2 domain in the interval 22-93 (LNEFFTRELA…GIAIYAERVE (72 aa)). Residues 223-251 (TVKSYKQTAEDETETDAPVEAEAEVEATA) are disordered. The span at 232 to 251 (EDETETDAPVEAEAEVEATA) shows a compositional bias: acidic residues.

Belongs to the universal ribosomal protein uS3 family. As to quaternary structure, component of the small ribosomal subunit. Mature ribosomes consist of a small (40S) and a large (60S) subunit. The 40S subunit contains about 32 different proteins and 1 molecule of RNA (18S). The 60S subunit contains 45 different proteins and 3 molecules of RNA (25S, 5.8S and 5S).

The protein resides in the cytoplasm. Its function is as follows. Component of the ribosome, a large ribonucleoprotein complex responsible for the synthesis of proteins in the cell. The small ribosomal subunit (SSU) binds messenger RNAs (mRNAs) and translates the encoded message by selecting cognate aminoacyl-transfer RNA (tRNA) molecules. The large subunit (LSU) contains the ribosomal catalytic site termed the peptidyl transferase center (PTC), which catalyzes the formation of peptide bonds, thereby polymerizing the amino acids delivered by tRNAs into a polypeptide chain. The nascent polypeptides leave the ribosome through a tunnel in the LSU and interact with protein factors that function in enzymatic processing, targeting, and the membrane insertion of nascent chains at the exit of the ribosomal tunnel. The sequence is that of Small ribosomal subunit protein uS3 (RPS3) from Candida albicans (strain SC5314 / ATCC MYA-2876) (Yeast).